The primary structure comprises 197 residues: Ribose 1,5-bisphosphate phosphokinase PhnN (197 aa).

21-28 (GPSGAGKD) contributes to the ATP binding site.

This sequence belongs to the ribose 1,5-bisphosphokinase family.

The catalysed reaction is alpha-D-ribose 1,5-bisphosphate + ATP = 5-phospho-alpha-D-ribose 1-diphosphate + ADP. It functions in the pathway metabolic intermediate biosynthesis; 5-phospho-alpha-D-ribose 1-diphosphate biosynthesis; 5-phospho-alpha-D-ribose 1-diphosphate from D-ribose 5-phosphate (route II): step 3/3. Its function is as follows. Catalyzes the phosphorylation of ribose 1,5-bisphosphate to 5-phospho-D-ribosyl alpha-1-diphosphate (PRPP). This is Ribose 1,5-bisphosphate phosphokinase PhnN from Rhizobium etli (strain CIAT 652).